Here is an 89-residue protein sequence, read N- to C-terminus: Small ribosomal subunit protein uS17 (89 aa).

This sequence belongs to the universal ribosomal protein uS17 family. As to quaternary structure, part of the 30S ribosomal subunit.

Its function is as follows. One of the primary rRNA binding proteins, it binds specifically to the 5'-end of 16S ribosomal RNA. The protein is Small ribosomal subunit protein uS17 of Lactiplantibacillus plantarum (strain ATCC BAA-793 / NCIMB 8826 / WCFS1) (Lactobacillus plantarum).